We begin with the raw amino-acid sequence, 88 residues long: DASH complex subunit HSK3 (88 aa).

Residues 1–15 are compositionally biased toward low complexity; sequence MSSRGSGANAASRQS. A disordered region spans residues 1–24; that stretch reads MSSRGSGANAASRQSMTASGGAVK.

This sequence belongs to the DASH complex HSK3 family. In terms of assembly, component of the DASH complex consisting of ASK1, DAD1, DAD2, DAD3, DAD4, DAM1, DUO1, HSK3, SPC19 and SPC34, with a stoichiometry of one copy of each subunit per complex. Multiple DASH complexes oligomerize to form a ring that encircles spindle microtubules and organizes the rod-like NDC80 complexes of the outer kinetochore. DASH complex oligomerization strengthens microtubule attachments. On cytoplasmic microtubules, DASH complexes appear to form patches instead of rings.

Its subcellular location is the nucleus. The protein localises to the cytoplasm. The protein resides in the cytoskeleton. It is found in the spindle. It localises to the chromosome. Its subcellular location is the centromere. The protein localises to the kinetochore. Component of the DASH complex that connects microtubules with kinetochores and couples microtubule depolymerisation to chromosome movement; it is involved in retrieving kinetochores to the spindle poles before their re-orientation on the spindle in early mitosis and allows microtubule depolymerization to pull chromosomes apart and resist detachment during anaphase. Kinetochores, consisting of a centromere-associated inner segment and a microtubule-contacting outer segment, play a crucial role in chromosome segregation by mediating the physical connection between centromeric DNA and microtubules. Kinetochores also serve as an input point for the spindle assembly checkpoint, which delays anaphase until all chromosomes have bioriented on the mitotic spindle. This is DASH complex subunit HSK3 from Chaetomium thermophilum (strain DSM 1495 / CBS 144.50 / IMI 039719) (Thermochaetoides thermophila).